The following is a 510-amino-acid chain: Indoleacetate--CoA ligase (510 aa).

It belongs to the ATP-dependent AMP-binding enzyme family. As to quaternary structure, monomer.

It catalyses the reaction (indol-3-yl)acetate + ATP + CoA = (indol-3-yl)acetyl-CoA + AMP + diphosphate. The catalysed reaction is (indol-3-yl)acetate + ATP + H(+) = (indol-3-yl)acetyl-AMP + diphosphate. The enzyme catalyses (indol-3-yl)acetyl-AMP + CoA = (indol-3-yl)acetyl-CoA + AMP + H(+). Its activity is regulated as follows. Inhibited by high concentrations of substrates, and by the synthetic auxin compound 2,4-dichlorophenoxyacetate (2,4-D), which does not serve as substrate. In terms of biological role, involved in degradation of indoleacetate, the most common member of the auxin class of plant hormones. Highly specific indoleacetate-CoA ligase which catalyzes the ATP-dependent activation of indoleacetate (IAA) to indoleacetyl-CoA. Also activates some closely related compounds such as the non-physiological compound (2-naphthyl)acetate and phenylacetate, which seems to be a fortuitous substrate for IaaB. The polypeptide is Indoleacetate--CoA ligase (Aromatoleum aromaticum (strain DSM 19018 / LMG 30748 / EbN1) (Azoarcus sp. (strain EbN1))).